The chain runs to 425 residues: UPF0597 protein VSAL_I0741 (425 aa).

Belongs to the UPF0597 family.

The chain is UPF0597 protein VSAL_I0741 from Aliivibrio salmonicida (strain LFI1238) (Vibrio salmonicida (strain LFI1238)).